Reading from the N-terminus, the 264-residue chain is L-aspartate dehydrogenase (264 aa).

Residues Ala120 and Asn186 each coordinate NAD(+). His216 is an active-site residue.

The protein belongs to the L-aspartate dehydrogenase family.

It carries out the reaction L-aspartate + NADP(+) + H2O = oxaloacetate + NH4(+) + NADPH + H(+). The catalysed reaction is L-aspartate + NAD(+) + H2O = oxaloacetate + NH4(+) + NADH + H(+). The protein operates within cofactor biosynthesis; NAD(+) biosynthesis; iminoaspartate from L-aspartate (dehydrogenase route): step 1/1. In terms of biological role, specifically catalyzes the NAD or NADP-dependent dehydrogenation of L-aspartate to iminoaspartate. In Serratia proteamaculans (strain 568), this protein is L-aspartate dehydrogenase.